Here is a 245-residue protein sequence, read N- to C-terminus: rRNA adenine N-6-methyltransferase (245 aa).

Residues asparagine 10, leucine 12, glycine 37, glutamate 58, aspartate 83, and asparagine 100 each contribute to the S-adenosyl-L-methionine site.

This sequence belongs to the class I-like SAM-binding methyltransferase superfamily. rRNA adenine N(6)-methyltransferase family.

The enzyme catalyses adenosine(2085) in 23S rRNA + 2 S-adenosyl-L-methionine = N(6)-dimethyladenosine(2085) in 23S rRNA + 2 S-adenosyl-L-homocysteine + 2 H(+). Its function is as follows. This protein produces a dimethylation of the adenine residue at position 2085 in 23S rRNA, resulting in reduced affinity between ribosomes and macrolide-lincosamide-streptogramin B antibiotics. In Enterococcus faecalis (strain ATCC 700802 / V583), this protein is rRNA adenine N-6-methyltransferase (ermB).